A 190-amino-acid chain; its full sequence is Adenine phosphoribosyltransferase (190 aa).

It belongs to the purine/pyrimidine phosphoribosyltransferase family. As to quaternary structure, homodimer.

It is found in the cytoplasm. It catalyses the reaction AMP + diphosphate = 5-phospho-alpha-D-ribose 1-diphosphate + adenine. The protein operates within purine metabolism; AMP biosynthesis via salvage pathway; AMP from adenine: step 1/1. Catalyzes a salvage reaction resulting in the formation of AMP, that is energically less costly than de novo synthesis. The sequence is that of Adenine phosphoribosyltransferase from Treponema denticola (strain ATCC 35405 / DSM 14222 / CIP 103919 / JCM 8153 / KCTC 15104).